A 160-amino-acid chain; its full sequence is Prostaglandin E synthase 3 (160 aa).

One can recognise a CS domain in the interval 1-90; that stretch reads MQPASAKWYD…ESGQSWPRLT (90 aa). An N6-acetyllysine modification is found at K33. K35 participates in a covalent cross-link: Glycyl lysine isopeptide (Lys-Gly) (interchain with G-Cter in SUMO2). S44 carries the post-translational modification Phosphoserine. K65 participates in a covalent cross-link: Glycyl lysine isopeptide (Lys-Gly) (interchain with G-Cter in SUMO2). Phosphoserine is present on residues S85, S100, S113, S118, S148, and S151. Residues 124–160 are disordered; the sequence is SEMMNNMGGDEDVDLPEVDGADDDSQDSDDEKMPDLE. Acidic residues predominate over residues 132-153; it reads GDEDVDLPEVDGADDDSQDSDD. Residues 157–160 carry the PXLE motif motif; the sequence is PDLE.

It belongs to the p23/wos2 family. As to quaternary structure, probably forms a complex composed of chaperones HSP90 and HSP70, co-chaperones STIP1/HOP, CDC37, PPP5C, PTGES3/p23, TSC1 and client protein TSC2. Binds to the progesterone receptor. Interacts with TERT; the interaction, together with HSP90AA1, is required for correct assembly and stabilization of the telomerase holoenzyme complex. Interacts (via PXLE motif) with EGLN1/PHD2, recruiting EGLN1/PHD2 to the HSP90 pathway to facilitate HIF alpha proteins hydroxylation. Interacts with HSP90AA1, FLCN, FNIP1 and FNIP2. In terms of processing, proteolytically cleaved by caspase-7 (CASP7) in response to apoptosis, leading to its inactivation. As to expression, detected in testis and ovary, at lower levels in endometrium, myometrium, kidney and lung, and only faintly in spleen, heart and muscle (at protein level). Expressed at high levels in glandular and luminal epithelial cells of the endometrium, but also detected in stromal cells (at protein level).

It is found in the cytoplasm. It carries out the reaction prostaglandin H2 = prostaglandin E2. It functions in the pathway lipid metabolism; prostaglandin biosynthesis. Functionally, cytosolic prostaglandin synthase that catalyzes the oxidoreduction of prostaglandin endoperoxide H2 (PGH2) to prostaglandin E2 (PGE2). Molecular chaperone that localizes to genomic response elements in a hormone-dependent manner and disrupts receptor-mediated transcriptional activation, by promoting disassembly of transcriptional regulatory complexes. Facilitates HIF alpha proteins hydroxylation via interaction with EGLN1/PHD2, leading to recruit EGLN1/PHD2 to the HSP90 pathway. The sequence is that of Prostaglandin E synthase 3 (PTGES3) from Bos taurus (Bovine).